Consider the following 218-residue polypeptide: Mitochondrial fission factor (218 aa).

Over 1–198 the chain is Cytoplasmic; it reads MAEISRIQYE…ENKERAKREM (198 aa). A Phosphothreonine modification is found at Thr-89. Phosphoserine is present on residues Ser-129, Ser-131, Ser-146, and Ser-171. Residues 167–198 adopt a coiled-coil conformation; the sequence is VDAASLRRQIIKLNRRLQLLEEENKERAKREM. The chain crosses the membrane as a helical; Anchor for type IV membrane protein span at residues 199 to 216; that stretch reads VMYSITVAFWLLNSWLWF. At 217–218 the chain is on the mitochondrial intermembrane side; the sequence is RR.

Belongs to the Tango11 family. In terms of assembly, homodimer. Interacts with DNM1L. Interacts with C11orf65/MFI; the interaction inhibits MFF interaction with DNM1L.

Its subcellular location is the mitochondrion outer membrane. The protein resides in the peroxisome. The protein localises to the cytoplasmic vesicle. It is found in the secretory vesicle. It localises to the synaptic vesicle. Functionally, plays a role in mitochondrial and peroxisomal fission. Promotes the recruitment and association of the fission mediator dynamin-related protein 1 (DNM1L) to the mitochondrial surface. May be involved in regulation of synaptic vesicle membrane dynamics by recruitment of DNM1L to clathrin-containing vesicles. This Rattus norvegicus (Rat) protein is Mitochondrial fission factor (Mff).